The chain runs to 184 residues: MGFLTVLKKMRQKEREMRILLLGLDNAGKTTILKRFNGEPIDTISPTLGFNIKTLEHNGYTLNMWDVGGQKSLRSYWRNYFESTDGLVWVVDSADRMRLESCGQELQVLLQEERLAGATLLVLCNKQDLPGALSSNEIKEILHLEDITTHHWLVAGVSAVTGEKLLSSMDWLIADIAKRIFTLD.

A lipid anchor (N-myristoyl glycine) is attached at Gly-2. Residues 23–30 (GLDNAGKT), 66–70 (DVGGQ), and 125–128 (NKQD) contribute to the GTP site.

It belongs to the small GTPase superfamily. Arf family. In terms of tissue distribution, ubiquitously expressed.

Functionally, GTP-binding protein involved in protein trafficking; may modulate vesicle budding and uncoating within the Golgi apparatus. This Drosophila melanogaster (Fruit fly) protein is ADP-ribosylation factor-like protein 2 (Arl2).